Here is a 346-residue protein sequence, read N- to C-terminus: MAHRPRWTLSQVAELFEKPLLDLLFEAQQVHRQHFDPRQVQVSTLLSIKTGACPEDCKYCPQSSRYKTGLEAERLMEVEQVLESARKAKAAGSTRFCMGAAWKNPNERDMPYLEQMVQGVKDLGLEACMTLGTLSESQAQRLANAGLDYYNHNLDTSPEFYGNIITTRTYQERLDTLEKVRDAGIKVCSGGIVGLGETVKDRAGLLLQLANLPTPPESVPINMLVKVKGTPLADNDDVDAFDFIRTIAVARIMMPTSYVRLSAGREQMNEQTQAMCFMAGANSIFYGCKLLTTPNPEEDKDLQLFRKLGLNPQQTAVLAGDNEQQQRLEQALMTPDTDEYYNAAAL.

The 219-residue stretch at 38-256 folds into the Radical SAM core domain; it reads RQVQVSTLLS…IAVARIMMPT (219 aa). Residues cysteine 53, cysteine 57, and cysteine 60 each contribute to the [4Fe-4S] cluster site. Positions 97, 128, 188, and 260 each coordinate [2Fe-2S] cluster.

The protein belongs to the radical SAM superfamily. Biotin synthase family. As to quaternary structure, homodimer. [4Fe-4S] cluster is required as a cofactor. The cofactor is [2Fe-2S] cluster.

It carries out the reaction (4R,5S)-dethiobiotin + (sulfur carrier)-SH + 2 reduced [2Fe-2S]-[ferredoxin] + 2 S-adenosyl-L-methionine = (sulfur carrier)-H + biotin + 2 5'-deoxyadenosine + 2 L-methionine + 2 oxidized [2Fe-2S]-[ferredoxin]. It participates in cofactor biosynthesis; biotin biosynthesis; biotin from 7,8-diaminononanoate: step 2/2. Its function is as follows. Catalyzes the conversion of dethiobiotin (DTB) to biotin by the insertion of a sulfur atom into dethiobiotin via a radical-based mechanism. In Shigella boydii serotype 18 (strain CDC 3083-94 / BS512), this protein is Biotin synthase.